The primary structure comprises 131 residues: Large ribosomal subunit protein bL17 (131 aa).

It belongs to the bacterial ribosomal protein bL17 family. As to quaternary structure, part of the 50S ribosomal subunit. Contacts protein L32.

This is Large ribosomal subunit protein bL17 from Methylibium petroleiphilum (strain ATCC BAA-1232 / LMG 22953 / PM1).